A 262-amino-acid polypeptide reads, in one-letter code: Ribosomal RNA small subunit methyltransferase A (262 aa).

S-adenosyl-L-methionine-binding residues include His-16, Leu-18, Gly-43, Glu-64, Asp-89, and Asn-109.

Belongs to the class I-like SAM-binding methyltransferase superfamily. rRNA adenine N(6)-methyltransferase family. RsmA subfamily.

It localises to the cytoplasm. The catalysed reaction is adenosine(1518)/adenosine(1519) in 16S rRNA + 4 S-adenosyl-L-methionine = N(6)-dimethyladenosine(1518)/N(6)-dimethyladenosine(1519) in 16S rRNA + 4 S-adenosyl-L-homocysteine + 4 H(+). Its function is as follows. Specifically dimethylates two adjacent adenosines (A1518 and A1519) in the loop of a conserved hairpin near the 3'-end of 16S rRNA in the 30S particle. May play a critical role in biogenesis of 30S subunits. The chain is Ribosomal RNA small subunit methyltransferase A from Xanthomonas campestris pv. campestris (strain B100).